Here is a 146-residue protein sequence, read N- to C-terminus: Mite group 2 allergen Der p 2 (146 aa).

A signal peptide spans 1–17; it reads MMYKILCLSLLVAAVAR. 3 disulfides stabilise this stretch: Cys25–Cys136, Cys38–Cys44, and Cys90–Cys95.

It belongs to the NPC2 family.

It localises to the secreted. The chain is Mite group 2 allergen Der p 2 (DERP2) from Dermatophagoides pteronyssinus (European house dust mite).